Consider the following 325-residue polypeptide: HPr kinase/phosphorylase (325 aa).

Residues His-152 and Lys-173 contribute to the active site. Position 167-174 (167-174) interacts with ATP; the sequence is GESGLGKS. Ser-174 contributes to the Mg(2+) binding site. The active-site Proton acceptor; for phosphorylation activity. Proton donor; for dephosphorylation activity is Asp-191. Positions 215–224 are important for the catalytic mechanism of both phosphorylation and dephosphorylation; sequence LEVRGIGLLD. Position 216 (Glu-216) interacts with Mg(2+). Residue Arg-258 is part of the active site. Residues 279–284 form an important for the catalytic mechanism of dephosphorylation region; it reads AVDAGR.

This sequence belongs to the HPrK/P family. As to quaternary structure, homohexamer. Mg(2+) serves as cofactor.

It carries out the reaction [HPr protein]-L-serine + ATP = [HPr protein]-O-phospho-L-serine + ADP + H(+). It catalyses the reaction [HPr protein]-O-phospho-L-serine + phosphate + H(+) = [HPr protein]-L-serine + diphosphate. Catalyzes the ATP- as well as the pyrophosphate-dependent phosphorylation of a specific serine residue in HPr, a phosphocarrier protein of the phosphoenolpyruvate-dependent sugar phosphotransferase system (PTS). HprK/P also catalyzes the pyrophosphate-producing, inorganic phosphate-dependent dephosphorylation (phosphorolysis) of seryl-phosphorylated HPr (P-Ser-HPr). This is HPr kinase/phosphorylase from Leptothrix cholodnii (strain ATCC 51168 / LMG 8142 / SP-6) (Leptothrix discophora (strain SP-6)).